We begin with the raw amino-acid sequence, 548 residues long: uncharacterized protein (548 aa).

Short-chain dehydrogenase/reductase stretches follow at residues 1 to 250 (MDDR…WMSV) and 271 to 548 (PVED…LLSP). NADP(+) is bound at residue 12–37 (IVVTGAAGGIGRALVDIFAANGDVVV). Serine 141 contributes to the substrate binding site. Tyrosine 154 (proton acceptor) is an active-site residue. 280 to 304 (VIVMGGATGVGAAIARRFAENGDTV) lines the NADP(+) pocket. Tyrosine 420 functions as the Proton acceptor in the catalytic mechanism.

This sequence belongs to the short-chain dehydrogenases/reductases (SDR) family.

This is an uncharacterized protein from Sinorhizobium fredii (strain NBRC 101917 / NGR234).